A 549-amino-acid polypeptide reads, in one-letter code: Chaperonin GroEL 2 (549 aa).

ATP-binding positions include 29–32 (TLGP), Lys-50, 86–90 (DGTTT), Gly-414, 477–479 (NAA), and Asp-493.

The protein belongs to the chaperonin (HSP60) family. As to quaternary structure, forms a cylinder of 14 subunits composed of two heptameric rings stacked back-to-back. Interacts with the co-chaperonin GroES.

It is found in the cytoplasm. The enzyme catalyses ATP + H2O + a folded polypeptide = ADP + phosphate + an unfolded polypeptide.. In terms of biological role, together with its co-chaperonin GroES, plays an essential role in assisting protein folding. The GroEL-GroES system forms a nano-cage that allows encapsulation of the non-native substrate proteins and provides a physical environment optimized to promote and accelerate protein folding. This Myxococcus xanthus (strain DK1622) protein is Chaperonin GroEL 2.